A 450-amino-acid chain; its full sequence is Vimentin beta (450 aa).

Residues 1-81 (MSSRTSTSSY…FGLADAINTE (81 aa)) are head. A compositionally biased stretch (polar residues) spans 24 to 38 (STYSSRQYSSPGRTT). A disordered region spans residues 24–56 (STYSSRQYSSPGRTTSRVSYSSASSTSPSLYMS). The span at 39-56 (SRVSYSSASSTSPSLYMS) shows a compositional bias: low complexity. Residues 82 to 117 (FKANRTNEKAEMQHVNDRFASYIEEVRFLEQQNKIL) are coil 1A. One can recognise an IF rod domain in the interval 89 to 397 (EKAEMQHVND…NLLEGEEYRI (309 aa)). Positions 118 to 139 (TAELEQMRGKGSSRVGDLYEDE) are linker 1. Residues 140-231 (MRELRRQVDQ…KLHDEELAEL (92 aa)) are coil 1B. The segment at 232–254 (QMQIQERHVQIDMEVAKPDLTAA) is linker 12. Residues 255 to 393 (LRDVRQQYET…ATYRNLLEGE (139 aa)) are coil 2. Positions 394 to 450 (EYRITTPFPNLSSLSLRESMKEIRPAMDSLSKKVVIKTIETRDGHIINQSTQKDNLE) are tail.

The protein belongs to the intermediate filament family. Homomer. Post-translationally, one of the most prominent phosphoproteins in various cells of mesenchymal origin. Phosphorylation is enhanced during cell division, at which time vimentin filaments are significantly reorganized. In terms of tissue distribution, expressed in low amounts in retina, optic nerve, brain, and spinal cord and in very high amounts in eye lens.

Its function is as follows. Vimentins are class-III intermediate filaments found in various non-epithelial cells, especially mesenchymal cells. Vimentin is attached to the nucleus, endoplasmic reticulum, and mitochondria, either laterally or terminally. The sequence is that of Vimentin beta from Carassius auratus (Goldfish).